Consider the following 477-residue polypeptide: Polyketide synthase-related protein Dhc1 (477 aa).

Residues 34–112 form the Carrier domain; sequence EKMTVREGEL…AMTHCVFDRA (79 aa). Serine 72 is subject to O-(pantetheine 4'-phosphoryl)serine. The segment at 161 to 322 is ketoreductase (KR) domain; sequence LTGATSFLGS…AGEVFLENLV (162 aa). Residues 410 to 435 are disordered; it reads VQQQQQQQQRQSQPPRDDAADGSPTE. Low complexity predominate over residues 411–422; sequence QQQQQQQQRQSQ. The span at 424 to 435 shows a compositional bias: basic and acidic residues; that stretch reads PRDDAADGSPTE.

Its pathway is mycotoxin biosynthesis. Its function is as follows. Polyketide synthase-related protein; part of the gene cluster that mediates the biosynthesis of 10,11-dehydrocurvularin, a prevalent fungal phytotoxin with heat shock response and immune-modulatory activities. The highly reducing polyketide synthase Dhc3 is responsible for biosynthesis up to the tetraketide stage. The non-reducing polyketide synthase Dhc5 then conducts four additional chain extension cycles, producing the unreduced part of the nascent octaketide from C-1 to C-8 in 10,11-dehydrocurvularin. The role of Dhc1 in 10,11-dehydrocurvularin biosynthesis has not been identified yet. This is Polyketide synthase-related protein Dhc1 from Alternaria cinerariae.